The sequence spans 201 residues: Pyrrolidone-carboxylate peptidase (201 aa).

Active-site residues include Glu-81, Cys-143, and His-168.

The protein belongs to the peptidase C15 family. As to quaternary structure, homotetramer.

It localises to the cytoplasm. It catalyses the reaction Release of an N-terminal pyroglutamyl group from a polypeptide, the second amino acid generally not being Pro.. Functionally, removes 5-oxoproline from various penultimate amino acid residues except L-proline. The sequence is that of Pyrrolidone-carboxylate peptidase (pcp) from Halalkalibacterium halodurans (strain ATCC BAA-125 / DSM 18197 / FERM 7344 / JCM 9153 / C-125) (Bacillus halodurans).